A 328-amino-acid chain; its full sequence is Nitrilase (328 aa).

Residues 9–286 form the CN hydrolase domain; the sequence is VRVAAIQAEP…EGILYANVDV (278 aa). Glu49 (proton acceptor) is an active-site residue. Lys131 is an active-site residue. Cys166 acts as the Nucleophile in catalysis.

It belongs to the carbon-nitrogen hydrolase superfamily. Nitrilase family.

The enzyme catalyses a nitrile + 2 H2O = a carboxylate + NH4(+). In terms of biological role, nitrilase that hydrolyzes preferentially 4-cyanopyridine. Is also able to hydrolyze some aliphatic nitriles, such as (R,S)-mandelonitrile. The sequence is that of Nitrilase from Penicillium rubens (strain ATCC 28089 / DSM 1075 / NRRL 1951 / Wisconsin 54-1255) (Penicillium chrysogenum).